The sequence spans 453 residues: uncharacterized protein (453 aa).

A TRAM domain is found at 5–63; the sequence is LLKKNQSVELTIEDLTHDGSGVGKIDGYPLFIPNALPGEKITAKITKLNKNYGFARMEN. Residues Cys76, Cys82, Cys85, and Cys162 each coordinate [4Fe-4S] cluster. Gln285, Tyr314, Glu335, and Asp383 together coordinate S-adenosyl-L-methionine. Cys410 functions as the Nucleophile in the catalytic mechanism.

This sequence belongs to the class I-like SAM-binding methyltransferase superfamily. RNA M5U methyltransferase family.

This is an uncharacterized protein from Listeria innocua serovar 6a (strain ATCC BAA-680 / CLIP 11262).